A 309-amino-acid polypeptide reads, in one-letter code: Short-chain dehydrogenase/reductase ARMGADRAFT_1048226 (309 aa).

NADP(+) is bound by residues Lys64, Asp86, Asn113, and Lys145. Ser167 functions as the Proton donor in the catalytic mechanism. Residues Tyr196 and Lys200 each coordinate NADP(+). The active-site Proton acceptor is the Tyr196. Lys200 serves as the catalytic Lowers pKa of active site Tyr.

The protein belongs to the short-chain dehydrogenases/reductases (SDR) family.

It functions in the pathway secondary metabolite biosynthesis. Functionally, short-chain dehydrogenase/reductase, part of the gene cluster that mediates the biosynthesis of melleolides, a range of antifungal and phytotoxic polyketide derivatives composed of an orsellinic acid (OA) moiety esterified to various sesquiterpene alcohols. The first step in melleolides biosynthesis is performed by the delta(6)-protoilludene synthase PRO1 which catalyzes the cyclization of farnesyl diphosphate to protoilludene. The orsellinic acid synthase armB produces OA by condensing acetyl-CoA with 3 malonyl-CoA units in a three-round chain elongation reaction folowed by a C2-C7 ring closure. ArmB further catalyzes the trans-esterification of OA to the various sesquiterpene alcohols resulting from the hydroxylation of protoilludene. The melleolides cluster also includes 5 cytochrome P450 monooxygenases, 4 NAD(+)-dependent oxidoreductases, one flavin-dependent oxidoreductase, and one O-methyltransferase. The cytochrome P450 monooxygenases may be involved in protoilludene hydroxylation to elaborate melleolides with multiple alcohol groups, such as melleolide D, which carries alcohol functionalities at C-4, C-5, C-10, and C-13. The role of the NAD(+)-dependent enzymes remains unknown. Numerous melleolides, including arnamial, show 5'-O-methylation of the aromatic moiety which may be catalyzed by the methyltransferase encoded in the cluster. The flavin-dependent oxidoreductase might represent the dehydrogenase yielding the aldehyde in position 1 of arnamial and other melleolides. Finally, several halogenase localized outside of the cluster, are able to catalyze the transfer of a single chlorine atom to the melleolide backbone, resulting in a 6'-chloromelleolide product. This is Short-chain dehydrogenase/reductase ARMGADRAFT_1048226 from Armillaria gallica (Bulbous honey fungus).